The sequence spans 121 residues: Small ribosomal subunit protein uS13 (121 aa).

The interval 98–121 (RGQKTRNNAHTVKGKPKSIAGKKK) is disordered. The span at 109-121 (VKGKPKSIAGKKK) shows a compositional bias: basic residues.

The protein belongs to the universal ribosomal protein uS13 family. As to quaternary structure, part of the 30S ribosomal subunit. Forms a loose heterodimer with protein S19. Forms two bridges to the 50S subunit in the 70S ribosome.

Its function is as follows. Located at the top of the head of the 30S subunit, it contacts several helices of the 16S rRNA. In the 70S ribosome it contacts the 23S rRNA (bridge B1a) and protein L5 of the 50S subunit (bridge B1b), connecting the 2 subunits; these bridges are implicated in subunit movement. Contacts the tRNAs in the A and P-sites. This chain is Small ribosomal subunit protein uS13, found in Phytoplasma australiense.